The sequence spans 430 residues: MALLHSGRFLSGVAAAFHPGLAAAASARASSWWAHVEMGPPDPILGVTEAFKRDTNSKKMNLGVGAYRDDNGKPYVLPSVRKAEAQIAAKNLDKEYLPIAGLAEFCKASAELALGENNEVLKSGRYVTVQTISGTGALRIGASFLQRFFKFSRDVFLPKPTWGNHTPIFRDAGMQLQSYRYYDPKTCGFDFTGAIEDISKIPAQSVILLHACAHNPTGVDPRPEQWKEMATVVKKNNLFAFFDMAYQGFASGDGNKDAWAVRHFIEQGINVCLCQSYAKNMGLYGERVGAFTVVCKDAEEAKRVESQLKILIRPMYSNPPINGARIASTILTSPDLRKQWLHEVKGMADRIISMRTQLVSNLKKEGSSHNWQHIIDQIGMFCYTGLKPEQVERLTKEFSIYMTKDGRISVAGVTSGNVAYLAHAIHQVTK.

The N-terminal 29 residues, 1-29 (MALLHSGRFLSGVAAAFHPGLAAAASARA), are a transit peptide targeting the mitochondrion. The residue at position 48 (threonine 48) is a Phosphothreonine. N6-acetyllysine is present on lysine 59. Glycine 65 provides a ligand contact to substrate. Lysine 73 bears the N6-acetyllysine; alternate mark. An N6-succinyllysine; alternate modification is found at lysine 73. An N6-acetyllysine modification is found at lysine 82. N6-acetyllysine; alternate is present on lysine 90. N6-succinyllysine; alternate is present on lysine 90. A 3'-nitrotyrosine; alternate modification is found at tyrosine 96. A Phosphotyrosine; alternate modification is found at tyrosine 96. Lysine 107 and lysine 122 each carry N6-acetyllysine; alternate. An N6-succinyllysine; alternate mark is found at lysine 107 and lysine 122. Residue serine 143 is modified to Phosphoserine. Lysine 159 bears the N6-acetyllysine; alternate mark. Lysine 159 carries the N6-succinyllysine; alternate modification. Residue tryptophan 162 participates in substrate binding. N6-acetyllysine; alternate is present on lysine 185. Position 185 is an N6-succinyllysine; alternate (lysine 185). Asparagine 215 contacts substrate. An N6-succinyllysine modification is found at lysine 227. Lysine 234 bears the N6-acetyllysine mark. N6-acetyllysine; alternate is present on residues lysine 279 and lysine 296. The residue at position 279 (lysine 279) is an N6-(pyridoxal phosphate)lysine; alternate. At lysine 296 the chain carries N6-succinyllysine; alternate. At lysine 302 the chain carries N6-acetyllysine. Lysine 309 bears the N6-acetyllysine; alternate mark. Lysine 309 is subject to N6-succinyllysine; alternate. Arginine 313 is subject to Asymmetric dimethylarginine. Lysine 338 is subject to N6-acetyllysine; alternate. Lysine 338 carries the post-translational modification N6-succinyllysine; alternate. Lysine 345 is subject to N6-acetyllysine. Lysine 363 is modified (N6-acetyllysine; alternate). The residue at position 363 (lysine 363) is an N6-succinyllysine; alternate. N6-acetyllysine occurs at positions 364 and 387. 2 positions are modified to N6-acetyllysine; alternate: lysine 396 and lysine 404. Residues lysine 396 and lysine 404 each carry the N6-succinyllysine; alternate modification. Arginine 407 provides a ligand contact to substrate.

It belongs to the class-I pyridoxal-phosphate-dependent aminotransferase family. Homodimer. Requires pyridoxal 5'-phosphate as cofactor.

It is found in the mitochondrion matrix. The protein localises to the cell membrane. The enzyme catalyses L-aspartate + 2-oxoglutarate = oxaloacetate + L-glutamate. It carries out the reaction L-kynurenine + 2-oxoglutarate = 4-(2-aminophenyl)-2,4-dioxobutanoate + L-glutamate. In terms of biological role, catalyzes the irreversible transamination of the L-tryptophan metabolite L-kynurenine to form kynurenic acid (KA). As a member of the malate-aspartate shuttle, it has a key role in the intracellular NAD(H) redox balance. Is important for metabolite exchange between mitochondria and cytosol, and for amino acid metabolism. Facilitates cellular uptake of long-chain free fatty acids. The sequence is that of Aspartate aminotransferase, mitochondrial (GOT2) from Bos taurus (Bovine).